We begin with the raw amino-acid sequence, 688 residues long: Subtilisin-like protease 1 (688 aa).

An N-terminal signal peptide occupies residues 1 to 25 (MMLNKKVVALCTLTLHLFCIFLCLG). Positions 26–217 (KEVRSEENGK…IESDKLVSAD (192 aa)) are cleaved as a propeptide — inhibition peptide. Positions 99–129 (EKNKNDNHNNNNNNISSSSSSSSNTFGEEKE) are disordered. Residues 106 to 122 (HNNNNNNISSSSSSSSN) are compositionally biased toward low complexity. Residue Asn112 is glycosylated (N-linked (GlcNAc...) asparagine). Ca(2+) contacts are provided by Asn145, Thr148, and Pro150. Asn171 is a glycosylation site (N-linked (GlcNAc...) asparagine). A Ca(2+)-binding site is contributed by Gly205. An N-linked (GlcNAc...) asparagine glycan is attached at Asn261. 2 disordered regions span residues 264-284 (HAAT…DTFS) and 303-332 (NNNN…RPGK). Positions 303-328 (NNNNYYYSHSSNGHNSSSRNSSSSRS) are enriched in low complexity. N-linked (GlcNAc...) asparagine glycosylation is found at Asn317 and Asn322. Residue Asp337 participates in Ca(2+) binding. Positions 343–661 (QWGLDLSRLD…AGYADINKAV (319 aa)) constitute a Peptidase S8 domain. Intrachain disulfides connect Cys369–Cys479 and Cys458–Cys475. The Charge relay system role is filled by Asp372. 11 residues coordinate Ca(2+): Asp381, Glu392, Arg396, Phe399, Asp400, Asp401, Asp402, Asn404, Ile406, Asp408, and Asp409. N-linked (GlcNAc...) asparagine glycosylation is present at Asn417. Residue His428 is the Charge relay system of the active site. The Ca(2+) site is built by Ile439, Asn442, Ile444, and Val446. N-linked (GlcNAc...) asparagine glycosylation is found at Asn488, Asn501, and Asn520. Cys521 and Cys534 form a disulfide bridge. The N-linked (GlcNAc...) asparagine glycan is linked to Asn603. Ser606 functions as the Charge relay system in the catalytic mechanism. N-linked (GlcNAc...) asparagine glycosylation is present at Asn675.

The protein belongs to the peptidase S8 family. Heterodimer between p54 form and prodomain p31; the interaction inhibits p54 catalytic activity. Heterodimer p31-p54 is monomeric at basic pH and dimeric at acidic pH; dimerization is driven by the N-terminal prodomain (p31). Ca(2+) is required as a cofactor. In terms of processing, the prodomain (p31) is cleaved, probably by autocatalysis, during the transport to or in the Golgi apparatus, and remains non-covalently associated with the p54 form as an inhibitor. p54 is further cleaved into the p47 form. The p54-to-p47 conversion can be also autocatalytic. This cleavage is likely occurring in the exoneme prior to egress and is mediated by PMX/plasmepsin X. Heterodimer p31-p54 is activated by cleavage of prodomain (p31) by the aspartic protease PMX; cleavage by PMX abolishes inhibitory capacity of p31. Primary autocatalytic processing of SUB1 is essential for parasite growth; the p54-to-p47 conversion is dispensable for SUB1 functions in the parasites. The disulfide bond between Cys-521 and Cys-534 acts as a redox-sensitive disulfide switch. The oxidized form is required for catalytic activity. Post-translationally, the relevance of the N-glycosylation is not clear. In an insect expression system, SUB1 glycosylation appears to affect its processing into the active mature form suggesting that SUB1 may not be N-glycosylated in parasites.

Its subcellular location is the secreted. It is found in the parasitophorous vacuole lumen. It carries out the reaction Hydrolysis of proteins with broad specificity for peptide bonds, and a preference for a large uncharged residue in P1. Hydrolyzes peptide amides.. With respect to regulation, p54 and probably p47 forms are inhibited by the non-covalent interaction with the cleaved propeptide. Inhibited by subtilisin propeptide-like protein SUB1-ProM. Inhibited by small molecule MRT12113. Serine protease which plays an essential role in merozoite invasion of and egress from host erythrocytes by processing and activating various merozoite surface and parasitophorous vacuole proteins. Mediates the proteolytic maturation of serine proteases SERA4, SERA5 and SERA6 just prior to merozoite egress. Prior to merozoite egress, cleaves merozoite surface proteins MSP1, MSP6 and MSP7, which form the MSP1/6/7 complex, and thereby may prime the parasite cell surface for invasion of fresh erythrocytes. Prior to merozoite egress, cleaves MSRP2 converting it to MSRP2 p25 form, and RAP1 converting it to RAP1 p67 form. In Plasmodium falciparum (isolate 3D7), this protein is Subtilisin-like protease 1.